The chain runs to 138 residues: Prefoldin subunit alpha (138 aa).

It belongs to the prefoldin subunit alpha family. Heterohexamer of two alpha and four beta subunits.

The protein resides in the cytoplasm. Functionally, molecular chaperone capable of stabilizing a range of proteins. Seems to fulfill an ATP-independent, HSP70-like function in archaeal de novo protein folding. The polypeptide is Prefoldin subunit alpha (Methanococcoides burtonii (strain DSM 6242 / NBRC 107633 / OCM 468 / ACE-M)).